The primary structure comprises 450 residues: Phosphoglucosamine mutase (450 aa).

The active-site Phosphoserine intermediate is Ser-101. Residues Ser-101, Asp-243, Asp-245, and Asp-247 each coordinate Mg(2+). At Ser-101 the chain carries Phosphoserine.

This sequence belongs to the phosphohexose mutase family. Mg(2+) serves as cofactor. Activated by phosphorylation.

It carries out the reaction alpha-D-glucosamine 1-phosphate = D-glucosamine 6-phosphate. In terms of biological role, catalyzes the conversion of glucosamine-6-phosphate to glucosamine-1-phosphate. The chain is Phosphoglucosamine mutase from Desulfotalea psychrophila (strain LSv54 / DSM 12343).